The chain runs to 447 residues: Asparagine--tRNA ligase (447 aa).

It belongs to the class-II aminoacyl-tRNA synthetase family. In terms of assembly, homodimer.

It is found in the cytoplasm. It catalyses the reaction tRNA(Asn) + L-asparagine + ATP = L-asparaginyl-tRNA(Asn) + AMP + diphosphate + H(+). The protein is Asparagine--tRNA ligase of Lactococcus lactis subsp. lactis (strain IL1403) (Streptococcus lactis).